The primary structure comprises 257 residues: Putative hydro-lyase YcsI (257 aa).

This sequence belongs to the D-glutamate cyclase family.

The sequence is that of Putative hydro-lyase YcsI (ycsI) from Bacillus subtilis (strain 168).